Reading from the N-terminus, the 299-residue chain is Bifunctional protein FolD (299 aa).

NADP(+)-binding positions include 168-170 (GRS), serine 193, and isoleucine 234.

The protein belongs to the tetrahydrofolate dehydrogenase/cyclohydrolase family. As to quaternary structure, homodimer.

It carries out the reaction (6R)-5,10-methylene-5,6,7,8-tetrahydrofolate + NADP(+) = (6R)-5,10-methenyltetrahydrofolate + NADPH. The enzyme catalyses (6R)-5,10-methenyltetrahydrofolate + H2O = (6R)-10-formyltetrahydrofolate + H(+). It functions in the pathway one-carbon metabolism; tetrahydrofolate interconversion. Catalyzes the oxidation of 5,10-methylenetetrahydrofolate to 5,10-methenyltetrahydrofolate and then the hydrolysis of 5,10-methenyltetrahydrofolate to 10-formyltetrahydrofolate. The polypeptide is Bifunctional protein FolD (Rhizobium johnstonii (strain DSM 114642 / LMG 32736 / 3841) (Rhizobium leguminosarum bv. viciae)).